The primary structure comprises 307 residues: 4-diphosphocytidyl-2-C-methyl-D-erythritol kinase (307 aa).

Lys16 is an active-site residue. Residue 101 to 111 (PVAGGMAGGSA) coordinates ATP. The active site involves Asp143.

It belongs to the GHMP kinase family. IspE subfamily.

The enzyme catalyses 4-CDP-2-C-methyl-D-erythritol + ATP = 4-CDP-2-C-methyl-D-erythritol 2-phosphate + ADP + H(+). The protein operates within isoprenoid biosynthesis; isopentenyl diphosphate biosynthesis via DXP pathway; isopentenyl diphosphate from 1-deoxy-D-xylulose 5-phosphate: step 3/6. In terms of biological role, catalyzes the phosphorylation of the position 2 hydroxy group of 4-diphosphocytidyl-2C-methyl-D-erythritol. This is 4-diphosphocytidyl-2-C-methyl-D-erythritol kinase from Nocardia farcinica (strain IFM 10152).